Reading from the N-terminus, the 435-residue chain is Tryptophan synthase beta chain (435 aa).

An N6-(pyridoxal phosphate)lysine modification is found at lysine 92.

The protein belongs to the TrpB family. Tetramer of two alpha and two beta chains. The cofactor is pyridoxal 5'-phosphate.

The enzyme catalyses (1S,2R)-1-C-(indol-3-yl)glycerol 3-phosphate + L-serine = D-glyceraldehyde 3-phosphate + L-tryptophan + H2O. It participates in amino-acid biosynthesis; L-tryptophan biosynthesis; L-tryptophan from chorismate: step 5/5. The beta subunit is responsible for the synthesis of L-tryptophan from indole and L-serine. The sequence is that of Tryptophan synthase beta chain from Albidiferax ferrireducens (strain ATCC BAA-621 / DSM 15236 / T118) (Rhodoferax ferrireducens).